A 106-amino-acid polypeptide reads, in one-letter code: UPF0449 protein C19orf25 homolog (106 aa).

The protein belongs to the UPF0449 family.

This is UPF0449 protein C19orf25 homolog from Xenopus tropicalis (Western clawed frog).